Reading from the N-terminus, the 30-residue chain is Root cyclotide 1 (30 aa).

Positions 1 to 30 form a cross-link, cyclopeptide (Gly-Asn); that stretch reads GIPCAESCVWIPCTVTALLGCSCSNKVCYN. 3 disulfide bridges follow: cysteine 4-cysteine 21, cysteine 8-cysteine 23, and cysteine 13-cysteine 28.

This is a cyclic peptide. As to expression, expressed in roots.

Functionally, probably participates in a plant defense mechanism. The protein is Root cyclotide 1 of Viola hederacea (Australian violet).